The chain runs to 100 residues: UPF0473 protein Csac_1599 (100 aa).

This sequence belongs to the UPF0473 family.

The sequence is that of UPF0473 protein Csac_1599 from Caldicellulosiruptor saccharolyticus (strain ATCC 43494 / DSM 8903 / Tp8T 6331).